We begin with the raw amino-acid sequence, 369 residues long: Peptide chain release factor 2 (369 aa).

An N5-methylglutamine modification is found at glutamine 252.

Belongs to the prokaryotic/mitochondrial release factor family. In terms of processing, methylated by PrmC. Methylation increases the termination efficiency of RF2.

Its subcellular location is the cytoplasm. Peptide chain release factor 2 directs the termination of translation in response to the peptide chain termination codons UGA and UAA. In Staphylococcus aureus (strain MRSA252), this protein is Peptide chain release factor 2.